Consider the following 296-residue polypeptide: Small ribosomal subunit protein uS2 (296 aa).

The interval 245–296 (WEAPAAGFAGATGTGWDGAAGDEWGAAPATTEWAASAAPAAASGEAAKETTW) is disordered. Over residues 263–289 (AAGDEWGAAPATTEWAASAAPAAASGE) the composition is skewed to low complexity.

This sequence belongs to the universal ribosomal protein uS2 family. As to quaternary structure, component of the small ribosomal subunit. Mature ribosomes consist of a small (40S) and a large (60S) subunit. The 40S subunit contains about 33 different proteins and 1 molecule of RNA (18S). The 60S subunit contains about 49 different proteins and 3 molecules of RNA (25S, 5.8S and 5S). Interacts with RPS21.

Its subcellular location is the cytoplasm. Required for the assembly and/or stability of the 40S ribosomal subunit. Required for the processing of the 20S rRNA-precursor to mature 18S rRNA in a late step of the maturation of 40S ribosomal subunits. The polypeptide is Small ribosomal subunit protein uS2 (Fusarium vanettenii (strain ATCC MYA-4622 / CBS 123669 / FGSC 9596 / NRRL 45880 / 77-13-4) (Fusarium solani subsp. pisi)).